A 330-amino-acid chain; its full sequence is FKBP12-interacting protein of 37 kDa (330 aa).

Met-1 is subject to N-acetylmethionine. Over residues 1 to 12 (MEFSSQDDDFGG) the composition is skewed to acidic residues. Positions 1–43 (MEFSSQDDDFGGDDSAANATRASGNRRSFGDLEDDEDDIFGST) are disordered. Residues 17-26 (ANATRASGNR) show a composition bias toward polar residues. Residues 56 to 308 (SLRGSLKNCK…KGLEIVSELV (253 aa)) adopt a coiled-coil conformation.

It belongs to the fl(2)d family. As to quaternary structure, forms homodimers. Interacts with MTA/EMB1706. Interacts with FKBP12; interaction is inhibited by the immunosuppressive drug FK506. Interacts with VIR. Associates with MTA, MTB, VIR and HAKAI to form the m6A writer complex which is essential for adenosine methylation at specific mRNA sequences. As to expression, ubiquitously expressed with higher levels in primary and lateral roots, leaves, trichomes, and in pollen grains (at protein level).

It localises to the nucleus speckle. The protein resides in the nucleus. The protein localises to the nucleoplasm. Its function is as follows. Probable regulatory subunit of the N6-methyltransferase complex, a multiprotein complex that mediates N6-methyladenosine (m6A) methylation at the 5'-[AG]GAC-3' consensus sites of some mRNAs. Associates with MTA, MTB, VIR and HAKAI to form the m6A writer complex which is essential for adenosine methylation at specific mRNA sequences. N6-methyladenosine (m6A) plays a role in mRNA stability, processing, translation efficiency and editing. Essential protein required during endosperm development and embryogenesis. Involved in endoreduplication, especially in trichomes. May play a role in splicing events. This chain is FKBP12-interacting protein of 37 kDa, found in Arabidopsis thaliana (Mouse-ear cress).